The following is a 1004-amino-acid chain: Cadmium/zinc-transporting ATPase HMA3 (1004 aa).

Positions 42–108 (KKTYLDVLGV…ALNKAGLEAS (67 aa)) constitute an HMA domain. Transmembrane regions (helical) follow at residues 120–140 (RWPS…FFEW), 144–164 (PLQC…VRRG), 171–191 (LSLD…CLGD), 193–213 (TEAG…TLAC), 340–360 (CAKY…LIPA), 371–391 (WKLA…LSTP), 683–703 (IAVN…LAAA), and 707–727 (VLWA…LNSM). Positions 931-952 (TGCGASKRSPPAEGSCSGGEGG) are disordered.

Belongs to the cation transport ATPase (P-type) (TC 3.A.3) family. Type IB subfamily. Specifically expressed in roots.

It localises to the vacuole membrane. The enzyme catalyses Zn(2+)(in) + ATP + H2O = Zn(2+)(out) + ADP + phosphate + H(+). It catalyses the reaction Cd(2+)(in) + ATP + H2O = Cd(2+)(out) + ADP + phosphate + H(+). Root-specific cadmium (Cd) transporter that mediates Cd efflux in root vacuoles. Involved in Cd detoxification by sequestrating Cd into root vacuoles and limiting translocation of Cd from the roots to the shoots, and accumulation in grains. This chain is Cadmium/zinc-transporting ATPase HMA3, found in Oryza sativa subsp. japonica (Rice).